Reading from the N-terminus, the 393-residue chain is Nucleosome assembly protein 1-like 1 (393 aa).

A compositionally biased stretch (basic and acidic residues) spans methionine 1–threonine 10. Disordered stretches follow at residues methionine 1 to alanine 36 and glutamate 132 to proline 165. 2 stretches are compositionally biased toward acidic residues: residues glutamate 11–glutamate 30 and glutamate 132–serine 144. Residues tyrosine 126–alanine 151 carry the NAP1L motif motif. Positions glycine 145–proline 165 are enriched in basic and acidic residues. Residues isoleucine 274–histidine 280 carry the Nuclear localization signal motif. A compositionally biased stretch (acidic residues) spans alanine 347–aspartate 378. A disordered region spans residues alanine 347–glutamine 393. Residues tyrosine 379–glutamine 393 show a composition bias toward basic and acidic residues.

Belongs to the nucleosome assembly protein (NAP) family. In terms of assembly, forms homomultimers. Interacts with histone B4. Interacts with the B-type cyclins ccnb1 and ccnb2. In terms of processing, phosphorylated by cyclin B-cdc2 kinase complexes.

The protein resides in the cytoplasm. The protein localises to the nucleus. Functionally, acts as a chaperone for the linker histone to facilitate deposition of histone B4 onto linker DNA. Required for both remodeling of sperm chromatin into nucleosomes, and linker histone binding to nucleosome core dimers. Plays a role in tissue-specific gene regulation. Required for primitive hemopoiesis, acting upstream of tal1/scl. In Xenopus tropicalis (Western clawed frog), this protein is Nucleosome assembly protein 1-like 1.